The sequence spans 422 residues: Adenylosuccinate synthetase (422 aa).

Residues 12 to 18 (GDEGKGK) and 40 to 42 (GHT) contribute to the GTP site. The active-site Proton acceptor is Asp13. 2 residues coordinate Mg(2+): Asp13 and Gly40. IMP is bound by residues 13–16 (DEGK), 38–41 (NAGH), Thr129, Arg143, Asn221, Thr236, and Arg300. His41 functions as the Proton donor in the catalytic mechanism. 296 to 302 (VTTGRKR) provides a ligand contact to substrate. Residues Arg302, 328–330 (KLD), and 410–412 (GVG) contribute to the GTP site.

This sequence belongs to the adenylosuccinate synthetase family. As to quaternary structure, homodimer. Mg(2+) is required as a cofactor.

It is found in the cytoplasm. The catalysed reaction is IMP + L-aspartate + GTP = N(6)-(1,2-dicarboxyethyl)-AMP + GDP + phosphate + 2 H(+). It participates in purine metabolism; AMP biosynthesis via de novo pathway; AMP from IMP: step 1/2. In terms of biological role, plays an important role in the de novo pathway and in the salvage pathway of purine nucleotide biosynthesis. Catalyzes the first committed step in the biosynthesis of AMP from IMP. The polypeptide is Adenylosuccinate synthetase (Pyrenophora tritici-repentis (strain Pt-1C-BFP) (Wheat tan spot fungus)).